Reading from the N-terminus, the 265-residue chain is Histidine racemase (265 aa).

Cys-67 (proton acceptor) is an active-site residue. Cys-209 functions as the Proton donor in the catalytic mechanism.

Belongs to the histidine racemase family. As to quaternary structure, homodimer.

The catalysed reaction is L-histidine = D-histidine. Its activity is regulated as follows. Activity is not affected by buffer composition (PO(4) or Tris), ions (SO(4)(2-), Mg(2+) and EDTA) or the PLP inhibitor hydroxylamine. However, the activity is hindered by iodoacetamide and Hg(2+), which are known inhibitors of enzymes with catalytic thiols. Functionally, cofactor-independent isomerase that catalyzes the reversible conversion of L-histidine to D-histidine. Shows weak activity with L,L-lanthionine. The catalytic turnover is 10'000-fold faster with L-histidine than with L,L-lanthionine. May play a role in growth of F.nucleatum. The chain is Histidine racemase from Fusobacterium nucleatum subsp. nucleatum (strain ATCC 25586 / DSM 15643 / BCRC 10681 / CIP 101130 / JCM 8532 / KCTC 2640 / LMG 13131 / VPI 4355).